Here is a 427-residue protein sequence, read N- to C-terminus: UDP-N-acetyl-D-mannosamine dehydrogenase (427 aa).

NAD(+)-binding residues include Tyr-20, Ile-21, Asp-40, Arg-45, Thr-92, and Thr-130. Arg-157, Val-158, Lys-209, Asn-213, Arg-216, His-247, Arg-249, and Gly-260 together coordinate UDP-N-acetyl-alpha-D-mannosaminouronate. Lys-209 acts as the Proton donor/acceptor in catalysis. The active-site Nucleophile is Cys-263. Tyr-317 and Lys-318 together coordinate UDP-N-acetyl-alpha-D-mannosaminouronate. Position 325 (Arg-325) interacts with NAD(+). Lys-403 provides a ligand contact to UDP-N-acetyl-alpha-D-mannosaminouronate.

Belongs to the UDP-glucose/GDP-mannose dehydrogenase family. Homotetramer; probably dimer of dimers.

It catalyses the reaction UDP-N-acetyl-alpha-D-mannosamine + 2 NAD(+) + H2O = UDP-N-acetyl-alpha-D-mannosaminouronate + 2 NADH + 3 H(+). Its function is as follows. Catalyzes the four-electron oxidation of UDP-N-acetyl-D-mannosamine (UDP-ManNAc), reducing NAD(+) and releasing UDP-N-acetylmannosaminuronic acid (UDP-ManNAcA). The protein is UDP-N-acetyl-D-mannosamine dehydrogenase (wecC) of Methanocaldococcus jannaschii (strain ATCC 43067 / DSM 2661 / JAL-1 / JCM 10045 / NBRC 100440) (Methanococcus jannaschii).